The chain runs to 178 residues: Large ribosomal subunit protein uL6 (178 aa).

The protein belongs to the universal ribosomal protein uL6 family. As to quaternary structure, part of the 50S ribosomal subunit.

Functionally, this protein binds to the 23S rRNA, and is important in its secondary structure. It is located near the subunit interface in the base of the L7/L12 stalk, and near the tRNA binding site of the peptidyltransferase center. The protein is Large ribosomal subunit protein uL6 of Coxiella burnetii (strain CbuK_Q154) (Coxiella burnetii (strain Q154)).